We begin with the raw amino-acid sequence, 462 residues long: Glycerol-3-phosphate acyltransferase ATS12, chloroplastic (462 aa).

The transit peptide at M1–T82 directs the protein to the chloroplast. An HXXXXD motif motif is present at residues H233–D238.

The protein belongs to the GPAT/DAPAT family.

Its subcellular location is the plastid. The protein localises to the chloroplast stroma. It carries out the reaction a fatty acyl-[ACP] + sn-glycerol 3-phosphate = a 1-acyl-sn-glycero-3-phosphate + holo-[ACP]. It catalyses the reaction sn-glycerol 3-phosphate + an acyl-CoA = a 1-acyl-sn-glycero-3-phosphate + CoA. The protein operates within phospholipid metabolism; CDP-diacylglycerol biosynthesis; CDP-diacylglycerol from sn-glycerol 3-phosphate: step 1/3. Esterifies the acyl-group from acyl-acyl carrier proteins (acyl-ACPs) to the sn-1 position of glycerol-3-phosphate. The physiological acyl donors in chloroplasts are acyl-ACPs, but acyl-CoAs are used as artificial donor for in vitro reactions. The enzyme from chilling-resistant plants discriminates against non-fluid palmitic acid and selects oleic acid whereas the enzyme from sensitive plants accepts both fatty acids. Squash is chilling-sensitive. Does not seem to discriminate between the acyl-ACP thioesters 18:1-ACP, 18:0-ACP and 16:0-ACP. Exhibits higher selectivity for 16:0-CoA than 18:1-CoA in vitro. The sequence is that of Glycerol-3-phosphate acyltransferase ATS12, chloroplastic from Cucurbita moschata (Winter crookneck squash).